Here is a 317-residue protein sequence, read N- to C-terminus: Pantothenate kinase (317 aa).

99–106 (GSVSVGKS) contacts ATP.

Belongs to the prokaryotic pantothenate kinase family.

The protein resides in the cytoplasm. The enzyme catalyses (R)-pantothenate + ATP = (R)-4'-phosphopantothenate + ADP + H(+). Its pathway is cofactor biosynthesis; coenzyme A biosynthesis; CoA from (R)-pantothenate: step 1/5. In Histophilus somni (strain 2336) (Haemophilus somnus), this protein is Pantothenate kinase.